The following is a 142-amino-acid chain: MKTYTAKPETVQRDWFVVDAAGQTLGRLATEIARRLRGKHKPEYTPHVDTGDYIVVINAEQVRVTGAKTTDKMYYHHSGFPGGIKSINFEKLIAKAPERVIETAVKGMLPKNPLGRDMYRKLKVYKGANHPHTAQQPQELKI.

Belongs to the universal ribosomal protein uL13 family. As to quaternary structure, part of the 50S ribosomal subunit.

Its function is as follows. This protein is one of the early assembly proteins of the 50S ribosomal subunit, although it is not seen to bind rRNA by itself. It is important during the early stages of 50S assembly. In Pseudomonas paraeruginosa (strain DSM 24068 / PA7) (Pseudomonas aeruginosa (strain PA7)), this protein is Large ribosomal subunit protein uL13.